Reading from the N-terminus, the 468-residue chain is Intramembrane protease 2 (468 aa).

Over 1–22 (MAEAATEIPPTASNVTVFTFEE) the chain is Lumenal. An N-linked (GlcNAc...) asparagine glycan is attached at asparagine 14. The helical transmembrane segment at 23–43 (QATSSLALYGMSILCIIIGSI) threads the bilayer. The Cytoplasmic portion of the chain corresponds to 44–70 (RSAQYIRTNIDKKRLIEGSITMREARK). Residues 71–91 (FPISASLVLFGLYLFFKPAAE) form a helical membrane-spanning segment. Over 92-168 (RFLWVARVFQ…TNLPTIQKAE (77 aa)) the chain is Lumenal. N-linked (GlcNAc...) asparagine glycosylation is found at asparagine 114 and asparagine 123. The chain crosses the membrane as a helical span at residues 169–189 (CMQLLTFLICFEGVNAFASLL). Over 190 to 247 (KPFVTAFLKKMPLVPSFLRFNAPYLFSLKKGNKEMEEGDIEDAKKKETEYLFKIDFDR) the chain is Cytoplasmic. A helical transmembrane segment spans residues 248 to 265 (YDIIALLMCSPILISHLL). Topologically, residues 266–267 (KR) are lumenal. Residues 268–284 (HWITNNIIGVSFSILGI) form a helical membrane-spanning segment. The Cytoplasmic portion of the chain corresponds to 285–296 (ERLHLASFKAGS). Residues 297-317 (LLLVGLFFYDIFWVFGTDVMT) form a helical membrane-spanning segment. The active site involves aspartate 306. Topologically, residues 318–343 (SVAKGIDAPILLQFPQDIYRNGIMEA) are lumenal. The helical transmembrane segment at 344–364 (SKHSMLGLGDIVIPGIFIALL) threads the bilayer. The active site involves aspartate 353. Topologically, residues 365–388 (RRFDYRVVQTTAESKAPQGSLKGR) are cytoplasmic. The chain crosses the membrane as a helical span at residues 389-409 (YYFVVTVVAYMAGLFITMAVM). At 410–415 (HHFKAA) the chain is on the lumenal side. Residues 416–436 (QPALLYLVPCCLFVPLLLAVI) form a helical membrane-spanning segment. A PAL motif is present at residues 417–419 (PAL). The Cytoplasmic portion of the chain corresponds to 437 to 468 (RGELSALWNYDESRHVDNEENRKKVDSGKKNN).

This sequence belongs to the peptidase A22B family.

It is found in the membrane. It localises to the endoplasmic reticulum membrane. Its function is as follows. Acts as intramembrane protease. In larvae, required for the complete shedding of the cuticle during molting, possibly by regulating cholesterol uptake via lrp-1. Involved in embryonic and larval development. This is Intramembrane protease 2 from Caenorhabditis elegans.